The chain runs to 187 residues: Ribonuclease HII (187 aa).

Residues 1 to 187 (MIILGIDEAG…YKPVQVLLNE (187 aa)) enclose the RNase H type-2 domain. Residues Asp-7, Glu-8, and Asp-99 each coordinate a divalent metal cation.

Belongs to the RNase HII family. The cofactor is Mn(2+). It depends on Mg(2+) as a cofactor.

Its subcellular location is the cytoplasm. It catalyses the reaction Endonucleolytic cleavage to 5'-phosphomonoester.. In terms of biological role, endonuclease that specifically degrades the RNA of RNA-DNA hybrids. The chain is Ribonuclease HII from Francisella tularensis subsp. tularensis (strain FSC 198).